The chain runs to 859 residues: Paladin (859 aa).

The interval 1–34 (MGTTASTAQQTVSAGTSLEGLQGGSSSSMDSQHS) is disordered. The N-myristoyl glycine moiety is linked to residue Gly2. Residue Ser89 is modified to Phosphoserine.

Belongs to the paladin family. In terms of tissue distribution, vascular expression detected in the central nervous system, kidney, lung, heart, skeletal muscle, white adipose tissue (WAT), brown adipose tissue, liver, pancreas and spleen. Not expressed in all vessels: for instance, not expressed in capillaries in the brain, and expressed mainly in large vessels in the heart, WAT, liver, pancreas and kidney. Predominant nonvascular expression in myocardium and lung mesenchyme. In large vessels, primarily expressed by smooth muscle cells, but occasionally detected at low levels in the endothelium. Expressed in various cells of the hematopoietic lineage.

It is found in the cytoplasm. Its subcellular location is the cytosol. This Mus musculus (Mouse) protein is Paladin (Pald1).